Here is a 216-residue protein sequence, read N- to C-terminus: ATP-dependent dethiobiotin synthetase BioD (216 aa).

12–17 contributes to the ATP binding site; that stretch reads NVGKTF. Mg(2+) is bound at residue threonine 16. Residue lysine 36 is part of the active site. Serine 40 lines the substrate pocket. Residues aspartate 53, 110–113, and 170–171 each bind ATP; these read EGAG and NQ. Residues aspartate 53 and glutamate 110 each contribute to the Mg(2+) site.

It belongs to the dethiobiotin synthetase family. As to quaternary structure, homodimer. The cofactor is Mg(2+).

Its subcellular location is the cytoplasm. It catalyses the reaction (7R,8S)-7,8-diammoniononanoate + CO2 + ATP = (4R,5S)-dethiobiotin + ADP + phosphate + 3 H(+). Its pathway is cofactor biosynthesis; biotin biosynthesis; biotin from 7,8-diaminononanoate: step 1/2. Functionally, catalyzes a mechanistically unusual reaction, the ATP-dependent insertion of CO2 between the N7 and N8 nitrogen atoms of 7,8-diaminopelargonic acid (DAPA, also called 7,8-diammoniononanoate) to form a ureido ring. The sequence is that of ATP-dependent dethiobiotin synthetase BioD from Vesicomyosocius okutanii subsp. Calyptogena okutanii (strain HA).